A 380-amino-acid polypeptide reads, in one-letter code: Protein Wnt-5a (380 aa).

The signal sequence occupies residues 1 to 35; the sequence is MKKSIGILSPGVALGMAGSAMSSKFFLVALAIFFS. A propeptide spanning residues 36 to 61 is cleaved from the precursor; it reads FAQVVIEANSWWSLGMNNPVQMSEVY. Residues C104 and C115 are joined by a disulfide bond. 2 N-linked (GlcNAc...) asparagine glycosylation sites follow: N114 and N120. Cystine bridges form between C154/C162, C164/C182, C238/C252, C240/C247, C309/C340, C325/C335, C339/C379, C355/C370, C357/C367, and C362/C363. A lipid anchor (O-palmitoleoyl serine; by PORCN) is attached at S244. N312 and N326 each carry an N-linked (GlcNAc...) asparagine glycan.

The protein belongs to the Wnt family. As to quaternary structure, forms a soluble 1:1 complex with AFM; this prevents oligomerization and is required for prolonged biological activity. The complex with AFM may represent the physiological form in body fluids. Homooligomer; disulfide-linked, leading to inactivation (in vitro). Interacts with PORCN. Interacts with WLS. Interacts with glypican GCP3. Interacts with PKD1 (via extracellular domain). Interacts with TMEM67. Post-translationally, glycosylation is necessary for secretion but not for activity. Palmitoleoylation is required for efficient binding to frizzled receptors. Depalmitoleoylation leads to Wnt signaling pathway inhibition. In terms of processing, proteolytic processing by TIKI1 and TIKI2 promotes oxidation and formation of large disulfide-bond oligomers, leading to inactivation of WNT5A. Expression is increased in differentiated thyroid carcinomas compared to normal thyroid tissue and anaplastic thyroid tumors where expression is low or undetectable. Expression is found in thyrocytes but not in stromal cells (at protein level). Detected in neonate heart and lung.

Its subcellular location is the secreted. It is found in the extracellular space. It localises to the extracellular matrix. In terms of biological role, ligand for members of the frizzled family of seven transmembrane receptors. Can activate or inhibit canonical Wnt signaling, depending on receptor context. In the presence of FZD4, activates beta-catenin signaling. In the presence of ROR2, inhibits the canonical Wnt pathway by promoting beta-catenin degradation through a GSK3-independent pathway which involves down-regulation of beta-catenin-induced reporter gene expression. Suppression of the canonical pathway allows chondrogenesis to occur and inhibits tumor formation. Stimulates cell migration. Decreases proliferation, migration, invasiveness and clonogenicity of carcinoma cells and may act as a tumor suppressor. Mediates motility of melanoma cells. Required during embryogenesis for extension of the primary anterior-posterior axis and for outgrowth of limbs and the genital tubercle. Inhibits type II collagen expression in chondrocytes. This is Protein Wnt-5a (WNT5A) from Homo sapiens (Human).